We begin with the raw amino-acid sequence, 63 residues long: Large ribosomal subunit protein uL29 (63 aa).

This sequence belongs to the universal ribosomal protein uL29 family.

This Bacillus cereus (strain ATCC 14579 / DSM 31 / CCUG 7414 / JCM 2152 / NBRC 15305 / NCIMB 9373 / NCTC 2599 / NRRL B-3711) protein is Large ribosomal subunit protein uL29.